We begin with the raw amino-acid sequence, 219 residues long: Adenylate kinase (219 aa).

Residue 10–15 (GAGKGT) coordinates ATP. The NMP stretch occupies residues 30 to 59 (STGDMLRAAIREGTELGLKAKSVMESGGLV). AMP contacts are provided by residues Thr31, Arg36, 57-59 (GLV), 85-88 (GFPR), and Gln92. Residues 122 to 159 (GRRQHPASGRVYHIEYNPPKVEGKDDVTGEELVQRPDD) are LID. Residues Arg123 and 132–133 (VY) contribute to the ATP site. AMP-binding residues include Arg156 and Arg167. Arg202 serves as a coordination point for ATP.

The protein belongs to the adenylate kinase family. Monomer.

It is found in the cytoplasm. The enzyme catalyses AMP + ATP = 2 ADP. It participates in purine metabolism; AMP biosynthesis via salvage pathway; AMP from ADP: step 1/1. Functionally, catalyzes the reversible transfer of the terminal phosphate group between ATP and AMP. Plays an important role in cellular energy homeostasis and in adenine nucleotide metabolism. In Acinetobacter baylyi (strain ATCC 33305 / BD413 / ADP1), this protein is Adenylate kinase.